The primary structure comprises 83 residues: Glutaredoxin 3 (83 aa).

Positions 2 to 83 (ANVEIYTKET…ARGGLDPLLK (82 aa)) constitute a Glutaredoxin domain. C12 and C15 are disulfide-bonded.

It belongs to the glutaredoxin family. Monomer.

Its function is as follows. The disulfide bond functions as an electron carrier in the glutathione-dependent synthesis of deoxyribonucleotides by the enzyme ribonucleotide reductase. In addition, it is also involved in reducing some disulfides in a coupled system with glutathione reductase. The sequence is that of Glutaredoxin 3 (grxC) from Escherichia coli O157:H7.